Here is a 290-residue protein sequence, read N- to C-terminus: MNFVIATRRSKLAQVQTEIIIDLLNKKHDIECEKLLIETVGDKILEVSLDKIGGKGLFVKDIEVAMLEQRADAAVHSMKDVPYEMPKGFEIIAIPEREDVRDAFISLDNIKFKDLRKGAKIGTSSRRRAAQLKLLRPDLDIVPIRGNVQTRIEKIKKENLDGVILAVAGLKRVNLDHLITDYFDTKEMVPAIGQGALGIEVMEEHPKKELFKDLDHYNSKICVLAERAFMRELDGDCHSTIGAYASIKDNIMHIIGIFERKNKIIKKEITGTKDQYEKLGISLAEHILKD.

C237 is modified (S-(dipyrrolylmethanemethyl)cysteine).

This sequence belongs to the HMBS family. In terms of assembly, monomer. Dipyrromethane is required as a cofactor.

It carries out the reaction 4 porphobilinogen + H2O = hydroxymethylbilane + 4 NH4(+). The protein operates within porphyrin-containing compound metabolism; protoporphyrin-IX biosynthesis; coproporphyrinogen-III from 5-aminolevulinate: step 2/4. Its function is as follows. Tetrapolymerization of the monopyrrole PBG into the hydroxymethylbilane pre-uroporphyrinogen in several discrete steps. This Clostridium botulinum (strain ATCC 19397 / Type A) protein is Porphobilinogen deaminase.